A 101-amino-acid polypeptide reads, in one-letter code: Small ribosomal subunit protein uS14 (101 aa).

The segment at 1-20 is disordered; sequence MAKISAVERNKKRERLTKRD.

Belongs to the universal ribosomal protein uS14 family. Part of the 30S ribosomal subunit. Contacts proteins S3 and S10.

In terms of biological role, binds 16S rRNA, required for the assembly of 30S particles and may also be responsible for determining the conformation of the 16S rRNA at the A site. This is Small ribosomal subunit protein uS14 from Rhodospirillum rubrum (strain ATCC 11170 / ATH 1.1.1 / DSM 467 / LMG 4362 / NCIMB 8255 / S1).